The chain runs to 1552 residues: Nonribosomal peptide synthetase acrB (1552 aa).

Positions 129-564 are condensation; the sequence is ASFAQERIWF…PVANLAIFDE (436 aa). An adenylation region spans residues 594 to 999; the sequence is RHCKAHPRDV…RMEGSAQVKI (406 aa). Residues 1110–1186 enclose the Carrier domain; the sequence is APLGVEEEVM…AMARLLQPQE (77 aa). Position 1146 is an O-(pantetheine 4'-phosphoryl)serine (Ser1146). Positions 1226–1464 are thiolester reductase (R) domain; the sequence is LTGATGFLGR…DFVGVDAVAS (239 aa).

This sequence belongs to the NRP synthetase family.

The protein operates within secondary metabolite biosynthesis. Its function is as follows. Nonribosomal peptide synthetase; part of the cluster that mediates the biosynthesis of acurin A, a highly reduced polyketide coupled to a serine via a peptide bond. The activities of the highly reducing polyketide synthase acrA and the nonribosomal peptide synthetase acrB are collectively responsible for the synthesis of the acurin A core structure with a heptaketide backbone produced by acrA covalently fused to a L-serine by acrB. After the formation of the PK-NRP hybrid product, it is detached from acrB by reductive release to set up the formation of the lactam ring by aldol condensation. The hydrolyase acrC then catalyzes water loss to generate a double bond in the ring. This double bond is probably reduced, which is followed by three oxidations at C-22 to generate the carboxylic acid moiety, involving probably the FAD-binding monooxygenase acrE and the cytochrome P450 monooxygenases acrD and acrF. Finally, a last methylation step performed by the O-methyltransferase acrG leads to the production of acurin A. The protein is Nonribosomal peptide synthetase acrB of Aspergillus aculeatus (strain ATCC 16872 / CBS 172.66 / WB 5094).